Here is a 257-residue protein sequence, read N- to C-terminus: MNLIAIPALIDNYIWLLHNKKGECLIVDPGDATPVLHILSNYQLKLTSILLTHHHPDHVKGVKLLSQYFPVTIYGPQETFKQCANIIVKKGDFLVLLEKKFAVLSFPGHTLGHIGFYSYPWLFCGDTVFSAGCGRIFEGTTKQMYESFQEVNQLSSHTLICCAHEYTLTNLAFASSLLPKDRIISSYQRHVTILRNKKKPSLPTKLSLERLINPFFRCHDINLHQAINFSPLLGCEWLVFDYLRQKRDNFRGNSSQK.

Zn(2+) is bound by residues histidine 53, histidine 55, aspartate 57, histidine 58, histidine 109, aspartate 126, and histidine 164.

It belongs to the metallo-beta-lactamase superfamily. Glyoxalase II family. Monomer. Requires Zn(2+) as cofactor.

The catalysed reaction is an S-(2-hydroxyacyl)glutathione + H2O = a 2-hydroxy carboxylate + glutathione + H(+). The protein operates within secondary metabolite metabolism; methylglyoxal degradation; (R)-lactate from methylglyoxal: step 2/2. Its function is as follows. Thiolesterase that catalyzes the hydrolysis of S-D-lactoyl-glutathione to form glutathione and D-lactic acid. In Baumannia cicadellinicola subsp. Homalodisca coagulata, this protein is Hydroxyacylglutathione hydrolase.